Consider the following 379-residue polypeptide: 2-dehydropantoate 2-reductase (379 aa).

Residues 13-18 (GLGAMG) and N119 contribute to the NADP(+) site. N119 serves as a coordination point for substrate. Residue K224 is the Proton donor of the active site. Substrate contacts are provided by N228, N232, and S316. E328 is an NADP(+) binding site.

Belongs to the ketopantoate reductase family.

It carries out the reaction (R)-pantoate + NADP(+) = 2-dehydropantoate + NADPH + H(+). Its pathway is cofactor biosynthesis; (R)-pantothenate biosynthesis; (R)-pantoate from 3-methyl-2-oxobutanoate: step 2/2. Catalyzes the NADPH-dependent reduction of ketopantoate into pantoic acid. This is 2-dehydropantoate 2-reductase (PAN5) from Saccharomyces cerevisiae (strain ATCC 204508 / S288c) (Baker's yeast).